A 259-amino-acid polypeptide reads, in one-letter code: tRNA pseudouridine synthase A (259 aa).

The active-site Nucleophile is the D52. Y110 lines the substrate pocket.

The protein belongs to the tRNA pseudouridine synthase TruA family. Homodimer.

It catalyses the reaction uridine(38/39/40) in tRNA = pseudouridine(38/39/40) in tRNA. Functionally, formation of pseudouridine at positions 38, 39 and 40 in the anticodon stem and loop of transfer RNAs. This Coprothermobacter proteolyticus (strain ATCC 35245 / DSM 5265 / OCM 4 / BT) protein is tRNA pseudouridine synthase A.